Consider the following 649-residue polypeptide: Acetyl-coenzyme A synthetase (649 aa).

Residues 191-194 (RAGR), Thr311, and Asn335 each bind CoA. Residues 387–389 (GEP), 411–416 (DTWWQT), Asp500, and Arg515 each bind ATP. Residue Ser523 participates in CoA binding. Arg526 serves as a coordination point for ATP. Residues Val537, Phe539, and Ile542 each contribute to the Mg(2+) site. Arg584 is a binding site for CoA. N6-acetyllysine is present on Lys609.

This sequence belongs to the ATP-dependent AMP-binding enzyme family. It depends on Mg(2+) as a cofactor. In terms of processing, acetylated. Deacetylation by the SIR2-homolog deacetylase activates the enzyme.

The catalysed reaction is acetate + ATP + CoA = acetyl-CoA + AMP + diphosphate. Functionally, catalyzes the conversion of acetate into acetyl-CoA (AcCoA), an essential intermediate at the junction of anabolic and catabolic pathways. AcsA undergoes a two-step reaction. In the first half reaction, AcsA combines acetate with ATP to form acetyl-adenylate (AcAMP) intermediate. In the second half reaction, it can then transfer the acetyl group from AcAMP to the sulfhydryl group of CoA, forming the product AcCoA. This chain is Acetyl-coenzyme A synthetase, found in Photobacterium profundum (strain SS9).